A 439-amino-acid polypeptide reads, in one-letter code: Actin-related protein 3 (439 aa).

Residues 40-71 (PSAGTGGSGSGRPAVANKPSFLTGGAGPGGHL) form a disordered region.

The protein belongs to the actin family. ARP3 subfamily. Component of the Arp2/3 complex composed.

It is found in the cytoplasm. The protein localises to the cytoskeleton. Functions as ATP-binding component of the Arp2/3 complex which is involved in regulation of actin polymerization and together with an activating nucleation-promoting factor (NPF) mediates the formation of branched actin networks. Seems to contact the pointed end of the daughter actin filament. The chain is Actin-related protein 3 (arp-3) from Neurospora crassa (strain ATCC 24698 / 74-OR23-1A / CBS 708.71 / DSM 1257 / FGSC 987).